The chain runs to 302 residues: Syntaxin-17 (302 aa).

Ser2 is modified (N-acetylserine). Residues Ser2–Lys228 are Cytoplasmic-facing. Lys41 is subject to N6-acetyllysine. Positions Glu53–Glu123 form a coiled coil. Tyr157 bears the Phosphotyrosine; by ABL1 mark. Residues Ile162–Ala224 form the t-SNARE coiled-coil homology domain. A helical transmembrane segment spans residues Leu229–Leu249. A necessary and sufficient for localization to autophagosome region spans residues Leu229–Ile275. Residues Leu250–Lys254 are Lumenal-facing. Residues Val255–Ile275 form a helical membrane-spanning segment. The Cytoplasmic portion of the chain corresponds to Gln276–Ser302. Ser289 bears the Phosphoserine mark. The Endoplasmic reticulum retention signal motif lies at Lys299–Ser302.

It belongs to the syntaxin family. Forms a SNARE complex composed of VAMP8, SNAP29 and STX17 involved in fusion of autophagosome with lysosome. Interacts with VAMP7 and VTI1B. Probably interacts with BET1, SCFD1 and SEC22B. Interacts with PTPN2 and ABL1; involved in STX17 phosphorylation. Interacts with COPB1. Interacts with TMED9 and TMED10; the interaction is direct. Interacts with ATG14. Interacts with RUBCNL/PACER; promoting targeting of RUBCNL/PACER to autophagosome. Interacts with VAMP8, SNAP29, VPS39 and VPS41; these interactions are increased in the absence of TMEM39A. Interacts with IRGM; promoting STX17 recruitment to autophagosomes. Interacts with ATG8 proteins GABARAP and MAP1LC3B. Interacts with RNF115; this interaction enhances STX17 stability which in turn promotes autophagosome maturation. Interacts with RAB39A (GTP-bound); the interaction promotes autophagosome-lysosome membrane fusion driven by STX17-SNAP29-VAMP8. Interacts with RAB39B; the interaction may promote a different fonction in autophagy as compared with RAB39A. In terms of assembly, (Microbial infection) The interactions with VAMP8, SNAP29 and VPS41 are decreased in presence of SARS coronavirus-2/SARS-CoV-2 ORF3A protein. Phosphorylated at Tyr-157 probably by ABL1. Dephosphorylation by PTPN2; regulates exit from the endoplasmic reticulum. In terms of processing, (Microbial infection) Cleaved by the L.pneumophila serine protease Lpg1137, impairing endoplasmic reticulum-mitochondria communication, leading to inhibit autophagy.

It is found in the endoplasmic reticulum membrane. Its subcellular location is the smooth endoplasmic reticulum membrane. The protein localises to the endoplasmic reticulum-Golgi intermediate compartment membrane. The protein resides in the cytoplasmic vesicle. It localises to the autophagosome membrane. It is found in the COPII-coated vesicle membrane. Its subcellular location is the cytoplasm. The protein localises to the cytosol. The protein resides in the mitochondrion membrane. It localises to the autolysosome membrane. Its function is as follows. SNAREs, soluble N-ethylmaleimide-sensitive factor-attachment protein receptors, are essential proteins for fusion of cellular membranes. SNAREs localized on opposing membranes assemble to form a trans-SNARE complex, an extended, parallel four alpha-helical bundle that drives membrane fusion. STX17 is a SNARE of the autophagosome involved in autophagy through the direct control of autophagosome membrane fusion with the lysosome membrane. May also play a role in the early secretory pathway where it may maintain the architecture of the endoplasmic reticulum-Golgi intermediate compartment/ERGIC and Golgi and/or regulate transport between the endoplasmic reticulum, the ERGIC and the Golgi. The sequence is that of Syntaxin-17 from Homo sapiens (Human).